The following is a 297-amino-acid chain: uncharacterized protein (297 aa).

This is an uncharacterized protein from Escherichia coli O157:H7.